We begin with the raw amino-acid sequence, 509 residues long: Lengsin (509 aa).

Positions 1 to 34 (MNNEEDLLQEDSTRDEGNETEANSMNTLRRTRKK) are disordered. In terms of domain architecture, GS beta-grasp spans 83–177 (NRLQFVRFEA…VICDTFTVTG (95 aa)). One can recognise a GS catalytic domain in the interval 184-509 (PRYIAKRQLS…ERNKFLEYFI (326 aa)).

Belongs to the glutamine synthetase family. Dodecamer. Interacts with BFSP2 and VIM. As to expression, abundantly expressed in lens.

Functionally, may act as a component of the cytoskeleton or as a chaperone for the reorganization of intermediate filament proteins during terminal differentiation in the lens. Does not seem to have enzymatic activity. The sequence is that of Lengsin (LGSN) from Homo sapiens (Human).